Reading from the N-terminus, the 401-residue chain is Cysteine desulfurase (401 aa).

Residues 72 to 73 (AT), Asn-151, Gln-179, and 199 to 201 (SAH) each bind pyridoxal 5'-phosphate. The residue at position 202 (Lys-202) is an N6-(pyridoxal phosphate)lysine. Residue Thr-237 participates in pyridoxal 5'-phosphate binding. Cys-324 serves as the catalytic Cysteine persulfide intermediate. Cys-324 contributes to the [2Fe-2S] cluster binding site.

Belongs to the class-V pyridoxal-phosphate-dependent aminotransferase family. NifS/IscS subfamily. As to quaternary structure, homodimer. It depends on pyridoxal 5'-phosphate as a cofactor.

The enzyme catalyses (sulfur carrier)-H + L-cysteine = (sulfur carrier)-SH + L-alanine. Catalyzes the removal of elemental sulfur atoms from cysteine to produce alanine. Seems to participate in the biosynthesis of the nitrogenase metalloclusters by providing the inorganic sulfur required for the Fe-S core formation. The sequence is that of Cysteine desulfurase from Enterobacter agglomerans (Erwinia herbicola).